The following is a 606-amino-acid chain: Glutamine--fructose-6-phosphate aminotransferase [isomerizing] (606 aa).

Cys-2 acts as the Nucleophile; for GATase activity in catalysis. One can recognise a Glutamine amidotransferase type-2 domain in the interval 2–218 (CGIFGYLGEK…SGELAVLRIG (217 aa)). 2 consecutive SIS domains span residues 278–424 (FTES…HRQV) and 448–596 (LDSS…VDRP). Lys-601 acts as the For Fru-6P isomerization activity in catalysis.

Homodimer.

The protein resides in the cytoplasm. It carries out the reaction D-fructose 6-phosphate + L-glutamine = D-glucosamine 6-phosphate + L-glutamate. Catalyzes the first step in hexosamine metabolism, converting fructose-6P into glucosamine-6P using glutamine as a nitrogen source. The protein is Glutamine--fructose-6-phosphate aminotransferase [isomerizing] of Chlamydia trachomatis serovar D (strain ATCC VR-885 / DSM 19411 / UW-3/Cx).